A 616-amino-acid chain; its full sequence is Probable Xaa-Pro aminopeptidase P (616 aa).

Positions 413, 424, 522, and 536 each coordinate Mn(2+).

Belongs to the peptidase M24B family. Mn(2+) is required as a cofactor.

It carries out the reaction Release of any N-terminal amino acid, including proline, that is linked to proline, even from a dipeptide or tripeptide.. In terms of biological role, catalyzes the removal of a penultimate prolyl residue from the N-termini of peptides. This chain is Probable Xaa-Pro aminopeptidase P (AMPP), found in Paracoccidioides lutzii (strain ATCC MYA-826 / Pb01) (Paracoccidioides brasiliensis).